The sequence spans 167 residues: Leukotoxin-activating lysine-acyltransferase LktC serotype A11 (167 aa).

Residues His22 and Asp91 contribute to the active site.

This sequence belongs to the RTX toxin acyltransferase family.

Its subcellular location is the cytoplasm. It carries out the reaction a fatty acyl-[ACP] + L-lysyl-[protein] = N(6)-(fatty acyl)-L-lysyl-[protein] + holo-[ACP] + H(+). Involved in fatty acylation of the protoxin (LktA) at two internal lysine residues, thereby converting it to the active toxin. In Mannheimia haemolytica (Pasteurella haemolytica), this protein is Leukotoxin-activating lysine-acyltransferase LktC serotype A11 (lktC).